The sequence spans 577 residues: MNKVFDKLKPVFEAIAANKYISAIRDGFIACMPIIIFSSIFMMVAYVPNAWGFYWPDNVTNTLMVAYNYSMGLLALFVAGTTAKNLTDSKNLELPKTNQINPVAVIVASEISFVILSILPLKTGVDLTYMGTQGLICAYIVGLIVPNIYYVCIKNNVTIKLPEQVPGNIAQSFKDLIPMGLSVTAFWLFGVGFKAATGTVLPRWIIQVLSPLFQASDSYLGLALIAGAMAFFWFCGVQGPSIVQPAVVPIMIANTAANLQQYQAGQHVSHVLAMNTMDYVMNFGGTGATLVVPFIMLFAARSAQLKAVGKAAFVPCTFGVNEPVLFGMPIIMNPMLFIPFLATPIVNVCLFKFFVSVLGMNSMMYTMPWTVPGPIGILISTGFAPLAFVFVLLTLVLDVAIYFPFIRVYDSTLLAEEKAKEEVIEDDGMAVLASDTVSPSIPTGLTVATATDDDATHVLPETAPSAHGEAYFKQNEVDVLVLCAGGGTSGILANALNKLSKERGLKLSAAARAYGQDMDLIKDMNMVILAPQMESMKGNLKKITDKYGVKLVTTTGRQYIELTNNGDMALDFVESNL.

The PTS EIIC type-3 domain occupies 4–405 (VFDKLKPVFE…VLDVAIYFPF (402 aa)). 9 helical membrane passes run 27–47 (GFIA…VAYV), 63–83 (LMVA…GTTA), 100–120 (INPV…SILP), 133–153 (QGLI…YVCI), 176–196 (LIPM…FKAA), 219–239 (YLGL…GVQG), 280–300 (VMNF…LFAA), 326–346 (FGMP…TPIV), and 386–406 (LAFV…FPFI). The region spanning 476–577 (EVDVLVLCAG…MALDFVESNL (102 aa)) is the PTS EIIB type-3 domain. The active-site Phosphocysteine intermediate; for EIIB activity is the Cys-483. The residue at position 483 (Cys-483) is a Phosphocysteine; by EIIA.

The protein localises to the cell membrane. The catalysed reaction is lactose(out) + N(pros)-phospho-L-histidyl-[protein] = lactose 6-phosphate(in) + L-histidyl-[protein]. Its function is as follows. The phosphoenolpyruvate-dependent sugar phosphotransferase system (sugar PTS), a major carbohydrate active transport system, catalyzes the phosphorylation of incoming sugar substrates concomitantly with their translocation across the cell membrane. The enzyme II LacEF PTS system is involved in lactose transport. This is PTS system lactose-specific EIICB component from Lacticaseibacillus casei (Lactobacillus casei).